A 1664-amino-acid chain; its full sequence is MYND-type zinc finger-containing chromatin reader Zmynd8 (1664 aa).

Low complexity-rich tracts occupy residues 1-16 (MEST…SLKS), 30-40 (SPQPQLQSSSL), and 61-84 (SAPP…INVG). Disordered stretches follow at residues 1 to 84 (MEST…INVG), 251 to 271 (SLSN…LRSE), and 295 to 323 (LALN…KTPE). Residues 258–271 (NDDKGPRRSNLRSE) are compositionally biased toward basic and acidic residues. Residues 296–308 (ALNTSGEGESSLF) are compositionally biased toward polar residues. Low complexity predominate over residues 309–320 (SDASDTKTTTAK). Residues 343 to 389 (DPFCWKCRGCGKLMPCSKCLRSFHSYCVRPATTKFDSSWKCPECQVI) form a PHD-type zinc finger. 8 residues coordinate Zn(2+): Cys-346, Cys-349, Cys-358, Cys-361, His-366, Cys-369, Cys-383, and Cys-386. Residues 401 to 504 (VSVDLLSQLL…KVCRQEANEI (104 aa)) enclose the Bromo domain. Zn(2+) contacts are provided by Cys-507, Cys-510, and Cys-525. The region spanning 528–579 (PHLLLWAKLKGFPYWPAKAMGSSNSTLVNVRFFGKHDRAFVPVKDCFLYSAQ) is the PWWP domain. Disordered regions lie at residues 672–693 (KTKA…KKLS), 747–815 (ESVE…QNEN), 857–905 (KIPR…RQQE), and 919–1139 (TEVM…TNTS). Residues 676 to 690 (TESGNESDQSPSPTK) show a composition bias toward polar residues. Positions 775-784 (HKRKSKHARK) are enriched in basic residues. The segment covering 785–800 (QHDNQDNQIEEAEKTG) has biased composition (basic and acidic residues). Residues 874–884 (IPLPTAPPPKQ) are compositionally biased toward pro residues. A compositionally biased stretch (polar residues) spans 935-952 (PANQPQTDQVPLQQETIT). The span at 953–962 (AQPESQMPAA) shows a compositional bias: low complexity. The segment covering 1006 to 1019 (PPMPLPMPPPPPLP) has biased composition (pro residues). Positions 1037–1053 (TTIQRVSQKQGGKSTDT) are enriched in polar residues. Positions 1073-1097 (SPTHSPLLSTAPSPSASPKPTSTLA) are enriched in low complexity. Zn(2+)-binding residues include Cys-1399, Cys-1402, Cys-1410, Cys-1411, Cys-1417, Cys-1421, His-1429, and Cys-1433. An MYND-type zinc finger spans residues 1399-1433 (CANCMREAQLYCCWNTSYCDYPCQQLHWPGHSATC). Residues 1613-1648 (VPKATGRSGKNNSRMRQTYSNNINNSNPQGMRCNNN) are disordered. Polar residues predominate over residues 1620 to 1648 (SGKNNSRMRQTYSNNINNSNPQGMRCNNN).

The protein localises to the nucleus. It localises to the chromosome. Its function is as follows. Chromatin reader that recognizes specific histone signatures to regulate transcription. Plays a role in neuronal development. The polypeptide is MYND-type zinc finger-containing chromatin reader Zmynd8 (Drosophila melanogaster (Fruit fly)).